The primary structure comprises 172 residues: Shikimate kinase (172 aa).

11-16 (GAGKST) contributes to the ATP binding site. Position 15 (Ser-15) interacts with Mg(2+). Residues Asp-33, Arg-57, and Gly-79 each contribute to the substrate site. Arg-117 contacts ATP. Substrate is bound at residue Arg-136. Arg-153 contacts ATP.

It belongs to the shikimate kinase family. Monomer. Mg(2+) is required as a cofactor.

The protein localises to the cytoplasm. The catalysed reaction is shikimate + ATP = 3-phosphoshikimate + ADP + H(+). Its pathway is metabolic intermediate biosynthesis; chorismate biosynthesis; chorismate from D-erythrose 4-phosphate and phosphoenolpyruvate: step 5/7. Catalyzes the specific phosphorylation of the 3-hydroxyl group of shikimic acid using ATP as a cosubstrate. The sequence is that of Shikimate kinase from Pseudomonas putida (strain ATCC 700007 / DSM 6899 / JCM 31910 / BCRC 17059 / LMG 24140 / F1).